Consider the following 128-residue polypeptide: Lutropin subunit beta (128 aa).

6 disulfides stabilise this stretch: cysteine 18–cysteine 66, cysteine 32–cysteine 81, cysteine 35–cysteine 119, cysteine 43–cysteine 97, cysteine 47–cysteine 99, and cysteine 102–cysteine 109. N-linked (GlcNAc...) asparagine glycosylation occurs at asparagine 22.

This sequence belongs to the glycoprotein hormones subunit beta family. In terms of assembly, heterodimer of a common alpha chain and a unique beta chain which confers biological specificity to thyrotropin, lutropin, follitropin and gonadotropin.

It is found in the secreted. Its function is as follows. Promotes spermatogenesis and ovulation by stimulating the testes and ovaries to synthesize steroids. The protein is Lutropin subunit beta (LHB) of Struthio camelus (Common ostrich).